A 212-amino-acid polypeptide reads, in one-letter code: Maleylpyruvate isomerase (212 aa).

Residues 1-80 form the GST N-terminal domain; that stretch reads MKLYNFWRSG…WLEEQYPTPA (80 aa). Glutathione-binding positions include 9–11, H38, V52, 64–65, 102–104, 108–110, and R176; these read SGT, QS, DIH, and NRR. The 128-residue stretch at 85-212 folds into the GST C-terminal domain; that stretch reads DADGRQRVRA…AAPAAQPDSA (128 aa).

The protein belongs to the GST superfamily. Zeta family. Homodimer. Requires glutathione as cofactor.

It catalyses the reaction 3-maleylpyruvate = 3-fumarylpyruvate. It functions in the pathway aromatic compound metabolism; naphthalene degradation. Catalyzes the GSH-dependent isomerization of maleylpyruvate to fumarylpyruvate which is subsequently processed by NagK to form pyruvate and fumarate. The polypeptide is Maleylpyruvate isomerase (Ralstonia sp).